The sequence spans 537 residues: MEKRLIIAVLLSIGVLYAYSFIFPTPKPLTAPGAKQAAMSSASAPALPAAVAPTAGTAPLAAPAPQAGQAPAVAKDVTVDTDLYTAVFSTQGGGLKKFVLKKYKETVGPQGKDIVLVNETAANRYALLSDSREFGLSPDALYSASTGEVKVTNGGKGSLEFTTTTSQGITFRKVYTFSGDAYRIGLTEEVQNAGNVALTGAVHLLQTSRVVEAKKEGRYEVHAPSTLSEGKVKVDKLDNLLKNPVQYGKDIAWSAFADKYFMDGIIADKGSISQVRITRPANDAIQRDIVSPTVTVAPGQRSAVNYAVYYGPKDLDILKLQGNRLDEVIDYGWFGPIAKPLVHSLKFLYKYTGNYGIAIIIITFILKLVFFPLTHKSYKSMKDMQKLQPKMTELKEKFKNDRDAMNRAVMELYKTHKVNPLGGCLPMVVQIPVFFGLYRALMYSIELRHAPFYLWITDLSAKDPYYVTPIIMGVTMFIQQKMTPTNMDPVQAKMMLMLPIVFTFMFLNFPSGLVIYWLVNNVLTIAQQMYINKAVAD.

4 helical membrane passes run 5-25, 353-373, 418-438, and 495-515; these read LIIAVLLSIGVLYAYSFIFPT, GNYGIAIIIITFILKLVFFPL, VNPLGGCLPMVVQIPVFFGLY, and MLMLPIVFTFMFLNFPSGLVI.

Belongs to the OXA1/ALB3/YidC family. Type 1 subfamily. Interacts with the Sec translocase complex via SecD. Specifically interacts with transmembrane segments of nascent integral membrane proteins during membrane integration.

The protein resides in the cell inner membrane. Required for the insertion and/or proper folding and/or complex formation of integral membrane proteins into the membrane. Involved in integration of membrane proteins that insert both dependently and independently of the Sec translocase complex, as well as at least some lipoproteins. Aids folding of multispanning membrane proteins. The protein is Membrane protein insertase YidC of Citrifermentans bemidjiense (strain ATCC BAA-1014 / DSM 16622 / JCM 12645 / Bem) (Geobacter bemidjiensis).